A 194-amino-acid polypeptide reads, in one-letter code: Peptidyl-tRNA hydrolase (194 aa).

Residue Tyr16 participates in tRNA binding. His21 serves as the catalytic Proton acceptor. 3 residues coordinate tRNA: Phe67, Asn69, and Asn115.

Belongs to the PTH family. Monomer.

The protein localises to the cytoplasm. The catalysed reaction is an N-acyl-L-alpha-aminoacyl-tRNA + H2O = an N-acyl-L-amino acid + a tRNA + H(+). Hydrolyzes ribosome-free peptidyl-tRNAs (with 1 or more amino acids incorporated), which drop off the ribosome during protein synthesis, or as a result of ribosome stalling. Functionally, catalyzes the release of premature peptidyl moieties from peptidyl-tRNA molecules trapped in stalled 50S ribosomal subunits, and thus maintains levels of free tRNAs and 50S ribosomes. The chain is Peptidyl-tRNA hydrolase from Salmonella dublin (strain CT_02021853).